Reading from the N-terminus, the 612-residue chain is Dihydroxy-acid dehydratase (612 aa).

Residue D81 participates in Mg(2+) binding. C122 contributes to the [2Fe-2S] cluster binding site. Positions 123 and 124 each coordinate Mg(2+). At K124 the chain carries N6-carboxylysine. A [2Fe-2S] cluster-binding site is contributed by C195. Mg(2+) is bound at residue E491. S517 (proton acceptor) is an active-site residue.

This sequence belongs to the IlvD/Edd family. In terms of assembly, homodimer. Requires [2Fe-2S] cluster as cofactor. It depends on Mg(2+) as a cofactor.

The enzyme catalyses (2R)-2,3-dihydroxy-3-methylbutanoate = 3-methyl-2-oxobutanoate + H2O. The catalysed reaction is (2R,3R)-2,3-dihydroxy-3-methylpentanoate = (S)-3-methyl-2-oxopentanoate + H2O. The protein operates within amino-acid biosynthesis; L-isoleucine biosynthesis; L-isoleucine from 2-oxobutanoate: step 3/4. It participates in amino-acid biosynthesis; L-valine biosynthesis; L-valine from pyruvate: step 3/4. In terms of biological role, functions in the biosynthesis of branched-chain amino acids. Catalyzes the dehydration of (2R,3R)-2,3-dihydroxy-3-methylpentanoate (2,3-dihydroxy-3-methylvalerate) into 2-oxo-3-methylpentanoate (2-oxo-3-methylvalerate) and of (2R)-2,3-dihydroxy-3-methylbutanoate (2,3-dihydroxyisovalerate) into 2-oxo-3-methylbutanoate (2-oxoisovalerate), the penultimate precursor to L-isoleucine and L-valine, respectively. In Haemophilus influenzae (strain PittGG), this protein is Dihydroxy-acid dehydratase.